A 1064-amino-acid chain; its full sequence is Lysine-specific demethylase 4A (1064 aa).

At A2 the chain carries N-acetylalanine. The 43-residue stretch at 14–56 (IMTFYPTMEEFRNFSRYIAYIESQGAHRAGLAKVVPPKEWKPR) folds into the JmjN domain. Y132 provides a ligand contact to 2-oxoglutarate. In terms of domain architecture, JmjC spans 142–308 (EKHVDEWNIG…YGKQAVLCSC (167 aa)). Residues H188 and E190 each contribute to the Fe cation site. Residues N198 and K206 each contribute to the 2-oxoglutarate site. Zn(2+) is bound by residues C234 and H240. K241 is a binding site for 2-oxoglutarate. H276 contributes to the Fe cation binding site. Zn(2+) is bound by residues C306 and C308. The interval 358–384 (ELPPRAGNEEECPEEDMEGVEDGEEGD) is disordered. Positions 366–382 (EEECPEEDMEGVEDGEE) are enriched in acidic residues. Residue K471 forms a (Microbial infection) Glycyl lysine isopeptide (Lys-Gly) (interchain with G-Cter in SUMO) linkage. Disordered regions lie at residues 501-537 (FSGS…RAQG) and 616-641 (SDDE…KPLS). A compositionally biased stretch (low complexity) spans 509-532 (SSSLGSGSSRDSISSDSETSEPLS). At S523 the chain carries Phosphoserine. An interaction with NCOR1 region spans residues 597–638 (RQPLSKLPRHHPLVLQECVSDDETSEQLTPEEEAEETEAWAK). Positions 616 to 634 (SDDETSEQLTPEEEAEETE) are enriched in acidic residues. The segment at 709–767 (MCFTSTGCSTDINLSTPYLEEDGTSILVSCKKCSVRVHASCYGVPPAKASEDWMCSRCS) adopts a PHD-type 1 zinc-finger fold. The segment at 772–805 (EEDCCLCSLRGGALQRANDDRWVHVSCAVAILEA) adopts a C2HC pre-PHD-type zinc-finger fold. Residues 828 to 885 (LKCIFCKKRRKRTAGCCVQCSHGRCPTAFHVSCAQAAGVMMQPDDWPFVVFITCFRHK) form a PHD-type 2 zinc finger. 2 consecutive Tudor domains span residues 897–954 (QSIT…CLQF) and 955–1011 (GPPA…EELP).

This sequence belongs to the JHDM3 histone demethylase family. Interacts with histone deacetylase proteins HDAC1, HDAC2 and HDAC3. Interacts with RB and NCOR1. Interacts with VRK1. Interacts with FBXO22; this interaction promotes KDM4A ubiquitination. In terms of assembly, (Microbial infection) Interacts with HTLV-1 Tax protein. Requires Fe(2+) as cofactor. Post-translationally, (Microbial infection) SUMOylated by human herpesvirus 8 E3 SUMO-protein ligase K-bZIP/K8 at Lys-471; thereby modulating the chromatin binding and histone demethylase activity of KDM4A. Ubiquitinated by RNF8 and RNF168 following DNA damage, leading to its degradation. Degradation promotes accessibility of H4K20me2 mark for DNA repair protein TP53BP1, which is then recruited. Also ubiquitinated by the SCF(FBXO22) complex; leading to proteasomal degradation. Ubiquitous.

The protein resides in the nucleus. It carries out the reaction N(6),N(6),N(6)-trimethyl-L-lysyl(9)-[histone H3] + 2 2-oxoglutarate + 2 O2 = N(6)-methyl-L-lysyl(9)-[histone H3] + 2 formaldehyde + 2 succinate + 2 CO2. The catalysed reaction is N(6),N(6),N(6)-trimethyl-L-lysyl(36)-[histone H3] + 2 2-oxoglutarate + 2 O2 = N(6)-methyl-L-lysyl(36)-[histone H3] + 2 formaldehyde + 2 succinate + 2 CO2. Its activity is regulated as follows. Several specific inhibitors are being developed and tested. In terms of biological role, histone demethylase that specifically demethylates 'Lys-9' and 'Lys-36' residues of histone H3, thereby playing a central role in histone code. Does not demethylate histone H3 'Lys-4', H3 'Lys-27' nor H4 'Lys-20'. Demethylates trimethylated H3 'Lys-9' and H3 'Lys-36' residue, while it has no activity on mono- and dimethylated residues. Demethylation of Lys residue generates formaldehyde and succinate. Participates in transcriptional repression of ASCL2 and E2F-responsive promoters via the recruitment of histone deacetylases and NCOR1, respectively. Its function is as follows. Crucial for muscle differentiation, promotes transcriptional activation of the Myog gene by directing the removal of repressive chromatin marks at its promoter. Lacks the N-terminal demethylase domain. The chain is Lysine-specific demethylase 4A (KDM4A) from Homo sapiens (Human).